Reading from the N-terminus, the 466-residue chain is Citrate synthase, mitochondrial (466 aa).

The N-terminal 27 residues, 1 to 27 (MALLTAAARLLGTKNASCLVLAARHAS), are a transit peptide targeting the mitochondrion. An SIFI-degron motif is present at residues 2 to 21 (ALLTAAARLLGTKNASCLVL). Lys57 carries the post-translational modification N6-succinyllysine. N6-acetyllysine; alternate is present on Lys76. Position 76 is an N6-succinyllysine; alternate (Lys76). N6-succinyllysine is present on residues Lys103 and Lys193. His301 is a catalytic residue. N6-acetyllysine; alternate is present on residues Lys321 and Lys327. N6-succinyllysine; alternate occurs at positions 321 and 327. His347 is an active-site residue. Arg356 serves as a coordination point for oxaloacetate. Lys375 bears the N6-acetyllysine; alternate mark. Lys375 bears the N6-succinyllysine; alternate mark. Position 382 is an N6-acetyllysine (Lys382). The residue at position 393 (Lys393) is an N6-acetyllysine; alternate. At Lys393 the chain carries N6-succinyllysine; alternate. Lys395 carries the post-translational modification N6,N6,N6-trimethyllysine. Residue Asp402 is part of the active site. Oxaloacetate contacts are provided by Arg428 and Arg448. Lys450 bears the N6-succinyllysine mark. Lys459 carries the post-translational modification N6-acetyllysine; alternate. Lys459 bears the N6-succinyllysine; alternate mark.

Belongs to the citrate synthase family. As to quaternary structure, homodimer. Methylated. Trimethylation at Lys-395 by CSKMT decreases citrate synthase activity. Post-translationally, in response to mitochondrial stress, the precursor protein is ubiquitinated by the SIFI complex in the cytoplasm before mitochondrial import, leading to its degradation. Within the SIFI complex, UBR4 initiates ubiquitin chain that are further elongated or branched by KCMF1.

The protein localises to the mitochondrion matrix. It catalyses the reaction oxaloacetate + acetyl-CoA + H2O = citrate + CoA + H(+). It functions in the pathway carbohydrate metabolism; tricarboxylic acid cycle; isocitrate from oxaloacetate: step 1/2. In terms of biological role, key enzyme of the Krebs tricarboxylic acid cycle which catalyzes the synthesis of citrate from acetyl coenzyme A and oxaloacetate. The chain is Citrate synthase, mitochondrial (CS) from Macaca fascicularis (Crab-eating macaque).